Consider the following 443-residue polypeptide: Phosphoglucosamine mutase (443 aa).

Ser101 serves as the catalytic Phosphoserine intermediate. Mg(2+)-binding residues include Ser101, Asp239, Asp241, and Asp243. Ser101 bears the Phosphoserine mark.

This sequence belongs to the phosphohexose mutase family. Requires Mg(2+) as cofactor. Activated by phosphorylation.

It catalyses the reaction alpha-D-glucosamine 1-phosphate = D-glucosamine 6-phosphate. Its function is as follows. Catalyzes the conversion of glucosamine-6-phosphate to glucosamine-1-phosphate. The polypeptide is Phosphoglucosamine mutase (Francisella tularensis subsp. novicida (strain U112)).